Reading from the N-terminus, the 393-residue chain is S-adenosylmethionine synthase 4 (393 aa).

Glutamate 9 serves as a coordination point for Mg(2+). Histidine 15 is an ATP binding site. K(+) is bound at residue glutamate 43. Residues glutamate 56 and glutamine 99 each coordinate L-methionine. ATP-binding positions include 167–169 (DGK), 235–238 (SGRF), aspartate 246, 252–253 (RK), alanine 269, lysine 273, and lysine 277. Aspartate 246 lines the L-methionine pocket. Lysine 277 provides a ligand contact to L-methionine.

Belongs to the AdoMet synthase family. In terms of assembly, homotetramer. Requires Mn(2+) as cofactor. Mg(2+) is required as a cofactor. It depends on Co(2+) as a cofactor. K(+) serves as cofactor. In terms of tissue distribution, detected in trichomes (at the protein level).

Its subcellular location is the cytoplasm. It catalyses the reaction L-methionine + ATP + H2O = S-adenosyl-L-methionine + phosphate + diphosphate. It participates in amino-acid biosynthesis; S-adenosyl-L-methionine biosynthesis; S-adenosyl-L-methionine from L-methionine: step 1/1. Functionally, catalyzes the formation of S-adenosylmethionine from methionine and ATP. The reaction comprises two steps that are both catalyzed by the same enzyme: formation of S-adenosylmethionine (AdoMet) and triphosphate, and subsequent hydrolysis of the triphosphate. The protein is S-adenosylmethionine synthase 4 (METK4) of Arabidopsis thaliana (Mouse-ear cress).